A 107-amino-acid chain; its full sequence is MGGKTVTRADLAEAVYRKVGLSRTESAALVEMILDEVCDAIVNGETVKLSSFATFQVRDKNERIGRNPKTGEEVPILPRRVMTFKASNVLKQRILQEHQKRQGKTSK.

The protein belongs to the bacterial histone-like protein family. As to quaternary structure, heterodimer of an alpha and a beta chain.

This protein is one of the two subunits of integration host factor, a specific DNA-binding protein that functions in genetic recombination as well as in transcriptional and translational control. This chain is Integration host factor subunit alpha, found in Brucella abortus (strain S19).